Here is a 427-residue protein sequence, read N- to C-terminus: NADH-quinone oxidoreductase subunit 14 (427 aa).

The next 14 helical transmembrane spans lie at M1–P21, L30–F50, G57–V77, S79–A99, L104–W124, F137–A157, Y172–F192, P204–L224, P230–A250, L257–N277, A280–S300, L322–F342, V360–L380, and A400–L420.

Belongs to the complex I subunit 2 family. As to quaternary structure, NDH-1 is composed of 15 different subunits, Nqo1 to Nqo15. The complex has a L-shaped structure, with the hydrophobic arm (subunits Nqo7, Nqo8 and Nqo10 to Nqo14) embedded in the membrane and the hydrophilic peripheral arm (subunits Nqo1 to Nqo6, Nqo9 and Nqo15) protruding into the bacterial cytoplasm. The hydrophilic domain contains all the redox centers.

The protein resides in the cell inner membrane. The enzyme catalyses a quinone + NADH + 5 H(+)(in) = a quinol + NAD(+) + 4 H(+)(out). In terms of biological role, NDH-1 shuttles electrons from NADH, via FMN and iron-sulfur (Fe-S) centers, to quinones in the respiratory chain. The immediate electron acceptor for the enzyme in this species is menaquinone. Couples the redox reaction to proton translocation (for every two electrons transferred, four hydrogen ions are translocated across the cytoplasmic membrane), and thus conserves the redox energy in a proton gradient required for the synthesis of ATP. The protein is NADH-quinone oxidoreductase subunit 14 (nqo14) of Thermus thermophilus (strain ATCC 27634 / DSM 579 / HB8).